Here is a 169-residue protein sequence, read N- to C-terminus: Putative outer membrane protein BBA03 (169 aa).

It localises to the cell outer membrane. This Borreliella burgdorferi (strain ATCC 35210 / DSM 4680 / CIP 102532 / B31) (Borrelia burgdorferi) protein is Putative outer membrane protein BBA03.